The primary structure comprises 44 residues: Cytochrome b559 subunit beta (44 aa).

The helical transmembrane segment at 19-35 (WLAVHTLAVPTVFFIGA) threads the bilayer. Histidine 23 serves as a coordination point for heme.

Belongs to the PsbE/PsbF family. In terms of assembly, heterodimer of an alpha subunit and a beta subunit. PSII is composed of 1 copy each of membrane proteins PsbA, PsbB, PsbC, PsbD, PsbE, PsbF, PsbH, PsbI, PsbJ, PsbK, PsbL, PsbM, PsbT, PsbX, PsbY, PsbZ, Psb30/Ycf12, peripheral proteins PsbO, CyanoQ (PsbQ), PsbU, PsbV and a large number of cofactors. It forms dimeric complexes. The cofactor is heme b.

It localises to the cellular thylakoid membrane. This b-type cytochrome is tightly associated with the reaction center of photosystem II (PSII). PSII is a light-driven water:plastoquinone oxidoreductase that uses light energy to abstract electrons from H(2)O, generating O(2) and a proton gradient subsequently used for ATP formation. It consists of a core antenna complex that captures photons, and an electron transfer chain that converts photonic excitation into a charge separation. The chain is Cytochrome b559 subunit beta from Gloeothece citriformis (strain PCC 7424) (Cyanothece sp. (strain PCC 7424)).